Here is a 374-residue protein sequence, read N- to C-terminus: Queuine tRNA-ribosyltransferase (374 aa).

Asp-91 acts as the Proton acceptor in catalysis. Substrate-binding positions include 91-95 (DSGGY), Asp-145, Gln-189, and Gly-216. An RNA binding region spans residues 247-253 (GVGTVPD). Asp-266 acts as the Nucleophile in catalysis. An RNA binding; important for wobble base 34 recognition region spans residues 271 to 275 (TRNAR). Cys-304, Cys-306, Cys-309, and His-335 together coordinate Zn(2+).

It belongs to the queuine tRNA-ribosyltransferase family. In terms of assembly, homodimer. Within each dimer, one monomer is responsible for RNA recognition and catalysis, while the other monomer binds to the replacement base PreQ1. Zn(2+) is required as a cofactor.

The catalysed reaction is 7-aminomethyl-7-carbaguanine + guanosine(34) in tRNA = 7-aminomethyl-7-carbaguanosine(34) in tRNA + guanine. The protein operates within tRNA modification; tRNA-queuosine biosynthesis. Functionally, catalyzes the base-exchange of a guanine (G) residue with the queuine precursor 7-aminomethyl-7-deazaguanine (PreQ1) at position 34 (anticodon wobble position) in tRNAs with GU(N) anticodons (tRNA-Asp, -Asn, -His and -Tyr). Catalysis occurs through a double-displacement mechanism. The nucleophile active site attacks the C1' of nucleotide 34 to detach the guanine base from the RNA, forming a covalent enzyme-RNA intermediate. The proton acceptor active site deprotonates the incoming PreQ1, allowing a nucleophilic attack on the C1' of the ribose to form the product. After dissociation, two additional enzymatic reactions on the tRNA convert PreQ1 to queuine (Q), resulting in the hypermodified nucleoside queuosine (7-(((4,5-cis-dihydroxy-2-cyclopenten-1-yl)amino)methyl)-7-deazaguanosine). This Leptospira borgpetersenii serovar Hardjo-bovis (strain JB197) protein is Queuine tRNA-ribosyltransferase.